Here is a 147-residue protein sequence, read N- to C-terminus: Cytochrome c-type biogenesis protein CcmE (147 aa).

The Cytoplasmic portion of the chain corresponds to 1–9; that stretch reads MKSLKKQRR. Residues 10–30 form a helical; Signal-anchor for type II membrane protein membrane-spanning segment; it reads IQIIALATVALVGSTALIGYA. Residues 31 to 147 lie on the Periplasmic side of the membrane; it reads MRDGINYFRS…EQGVYREGDS (117 aa). 2 residues coordinate heme: histidine 123 and tyrosine 127.

This sequence belongs to the CcmE/CycJ family.

It is found in the cell inner membrane. In terms of biological role, heme chaperone required for the biogenesis of c-type cytochromes. Transiently binds heme delivered by CcmC and transfers the heme to apo-cytochromes in a process facilitated by CcmF and CcmH. The sequence is that of Cytochrome c-type biogenesis protein CcmE from Ruegeria sp. (strain TM1040) (Silicibacter sp.).